Here is a 64-residue protein sequence, read N- to C-terminus: MIEVPCPICQKSVPWINESTFRPFCSKRCQLIDLGEWAAEEKAIPSDTADFAMDPNVSDEWSIK.

Positions 6, 9, 25, and 29 each coordinate Zn(2+).

It belongs to the DNA gyrase inhibitor YacG family. In terms of assembly, interacts with GyrB. Zn(2+) serves as cofactor.

Inhibits all the catalytic activities of DNA gyrase by preventing its interaction with DNA. Acts by binding directly to the C-terminal domain of GyrB, which probably disrupts DNA binding by the gyrase. This is DNA gyrase inhibitor YacG from Haemophilus influenzae (strain ATCC 51907 / DSM 11121 / KW20 / Rd).